Here is a 351-residue protein sequence, read N- to C-terminus: UDP-3-O-acylglucosamine N-acyltransferase (351 aa).

The active-site Proton acceptor is the H239.

The protein belongs to the transferase hexapeptide repeat family. LpxD subfamily. As to quaternary structure, homotrimer.

The enzyme catalyses a UDP-3-O-[(3R)-3-hydroxyacyl]-alpha-D-glucosamine + a (3R)-hydroxyacyl-[ACP] = a UDP-2-N,3-O-bis[(3R)-3-hydroxyacyl]-alpha-D-glucosamine + holo-[ACP] + H(+). The protein operates within bacterial outer membrane biogenesis; LPS lipid A biosynthesis. Catalyzes the N-acylation of UDP-3-O-acylglucosamine using 3-hydroxyacyl-ACP as the acyl donor. Is involved in the biosynthesis of lipid A, a phosphorylated glycolipid that anchors the lipopolysaccharide to the outer membrane of the cell. In Vibrio cholerae serotype O1 (strain ATCC 39315 / El Tor Inaba N16961), this protein is UDP-3-O-acylglucosamine N-acyltransferase.